The following is a 334-amino-acid chain: Succinate receptor 1 (334 aa).

Residues 5 to 31 (MAWNATCKNWLAAEAALEKYYLSIFYG) lie on the Extracellular side of the membrane. N-linked (GlcNAc...) asparagine glycosylation is present at asparagine 8. Residues 32 to 52 (IEFVVGVLGNTIVVYGYIFSL) traverse the membrane as a helical segment. Topologically, residues 53–59 (KNWNSSN) are cytoplasmic. The helical transmembrane segment at 60–80 (IYLFNLSVSDLAFLCTLPMLI) threads the bilayer. Residues 81 to 103 (RSYANGNWIYGDVLCISNRYVLH) lie on the Extracellular side of the membrane. A disulfide bridge links cysteine 95 with cysteine 172. Residues 104-124 (ANLYTSILFLTFISIDRYLII) traverse the membrane as a helical segment. The Cytoplasmic portion of the chain corresponds to 125 to 137 (KYPFREHLLQKKE). The helical transmembrane segment at 138-158 (FAILISLAIWVLVTLELLPIL) threads the bilayer. Residues 159 to 185 (PLINPVITDNGTTCNDFASSGDPNYNL) are Extracellular-facing. A glycan (N-linked (GlcNAc...) asparagine) is linked at asparagine 168. A helical membrane pass occupies residues 186–206 (IYSMCLTLLGFLIPLFVMCFF). The Cytoplasmic portion of the chain corresponds to 207–230 (YYKIALFLKQRNRQVATALPLEKP). The helical transmembrane segment at 231 to 251 (LNLVIMAVVIFSVLFTPYHVM) threads the bilayer. Residues 252–281 (RNVRIASRLGSWKQYQCTQVVINSFYIVTR) lie on the Extracellular side of the membrane. A helical transmembrane segment spans residues 282–302 (PLAFLNSVINPVFYFLLGDHF). The Cytoplasmic segment spans residues 303-334 (RDMLMNQLRHNFKSLTSFSRWAHELLLSFREK).

Belongs to the G-protein coupled receptor 1 family. Expressed specifically in kidney. Highly expressed in immature dendritic cells, expression rapidly downregulates after maturation. Also expressed in macrophages.

The protein resides in the cell membrane. In terms of biological role, g protein-coupled receptor for succinate able to mediate signaling through Gq/GNAQ or Gi/GNAI second messengers depending on the cell type and the processes regulated. Succinate-SUCNR1 signaling serves as a link between metabolic stress, inflammation and energy homeostasis. In macrophages, plays a range of immune-regulatory roles. During inflammation, succinate-SUCNR1 signaling may act as an anti-inflammatory mediator or boost inflammation depending on the inflammatory status of cells. Hyperpolarizes M2 macrophages versus M1 phenotype through Gq signaling by regulating the transcription of genes involved in immune function. In activated M1 macrophages, plays a pro-inflammatory role in response to LPS. Expressed in dendritic cells, where it is involved in the sensing of immunological danger and enhances immunity. Mediates succinate triggered intracelleular calcium mobilization, induces migratory responses and acts in synergy with Toll-like receptor ligands for the production of proinflammatory cytokines as well as an enhancement of antigen-specific activation of helper T cells. In the small intestine, mediates the activation of tuft cells by dietary succinate and triggers type 2 immunity. In adipocytes, plays an important role in the control of energy metabolism. In response to succinate, controls leptin expression in an AMPK-JNK-CEBPA-dependent as well as circadian clock-regulated manner. In muscle tissue, is expressed in non-muscle cells and coordinates muscle remodeling in response to the succinate produced during exercise training in a paracrine manner. In retina, acts as a mediator of vessel growth during retinal development. In response to succinate, regulates the production of angiogenic factors, including VEGF, by retinal ganglion neurons. The sequence is that of Succinate receptor 1 from Homo sapiens (Human).